Here is a 200-residue protein sequence, read N- to C-terminus: ATP synthase subunit s, mitochondrial (200 aa).

Residues 1–25 constitute a mitochondrion transit peptide; the sequence is MMLFGKVSQQLCGIKKLPWSCDSRY. The segment at 1-61 is N-terminal domain; sequence MMLFGKVSQQ…SEWLLRCGAM (61 aa). Gly59 lines the Mg(2+) pocket. LRR repeat units follow at residues 62–87, 88–116, 117–141, and 142–173; these read VRYH…KYKI, QAID…KIRL, CKCH…KSIL, and EMEI…LSDL. Thr93 lines the Mg(2+) pocket.

This sequence belongs to the ATP synthase subunit s family. Homotetramer. Associates with ATP synthase.

It localises to the mitochondrion. The protein localises to the mitochondrion inner membrane. In terms of biological role, involved in regulation of mitochondrial membrane ATP synthase. Necessary for H(+) conduction of ATP synthase. Facilitates energy-driven catalysis of ATP synthesis by blocking a proton leak through an alternative proton exit pathway. The protein is ATP synthase subunit s, mitochondrial (DMAC2L) of Macaca fascicularis (Crab-eating macaque).